We begin with the raw amino-acid sequence, 363 residues long: 3-dehydroquinate synthase (363 aa).

NAD(+) contacts are provided by residues 107-111 (GVIGD), 131-132 (TT), K144, and K153. E186, H251, and H268 together coordinate Zn(2+).

Belongs to the sugar phosphate cyclases superfamily. Dehydroquinate synthase family. It depends on NAD(+) as a cofactor. Requires Co(2+) as cofactor. The cofactor is Zn(2+).

It is found in the cytoplasm. The enzyme catalyses 7-phospho-2-dehydro-3-deoxy-D-arabino-heptonate = 3-dehydroquinate + phosphate. Its pathway is metabolic intermediate biosynthesis; chorismate biosynthesis; chorismate from D-erythrose 4-phosphate and phosphoenolpyruvate: step 2/7. Its function is as follows. Catalyzes the conversion of 3-deoxy-D-arabino-heptulosonate 7-phosphate (DAHP) to dehydroquinate (DHQ). The sequence is that of 3-dehydroquinate synthase from Nostoc sp. (strain PCC 7120 / SAG 25.82 / UTEX 2576).